A 100-amino-acid polypeptide reads, in one-letter code: Large ribosomal subunit protein uL23 (100 aa).

It belongs to the universal ribosomal protein uL23 family. In terms of assembly, part of the 50S ribosomal subunit. Contacts protein L29, and trigger factor when it is bound to the ribosome.

Its function is as follows. One of the early assembly proteins it binds 23S rRNA. One of the proteins that surrounds the polypeptide exit tunnel on the outside of the ribosome. Forms the main docking site for trigger factor binding to the ribosome. The chain is Large ribosomal subunit protein uL23 from Mycolicibacterium gilvum (strain PYR-GCK) (Mycobacterium gilvum (strain PYR-GCK)).